The primary structure comprises 376 residues: Probable low-specificity L-threonine aldolase (376 aa).

The segment covering 1-21 (MSGSVTSTTTETRLCPSNQGS) has biased composition (polar residues). Residues 1–22 (MSGSVTSTTTETRLCPSNQGSA) are disordered. The residue at position 226 (lysine 226) is an N6-(pyridoxal phosphate)lysine.

The protein belongs to the threonine aldolase family. As to quaternary structure, homotetramer. It depends on pyridoxal 5'-phosphate as a cofactor.

The catalysed reaction is L-threonine = acetaldehyde + glycine. It catalyses the reaction L-allo-threonine = acetaldehyde + glycine. It functions in the pathway amino-acid degradation; L-threonine degradation via aldolase pathway; acetaldehyde and glycine from L-threonine: step 1/1. This Schizosaccharomyces pombe (strain 972 / ATCC 24843) (Fission yeast) protein is Probable low-specificity L-threonine aldolase (gly1).